Here is a 388-residue protein sequence, read N- to C-terminus: S-adenosylmethionine synthase (388 aa).

Residue H17 participates in ATP binding. A Mg(2+)-binding site is contributed by D19. Residue E45 coordinates K(+). L-methionine-binding residues include E58 and Q101. Positions 101–111 (QSPDIGQGVDT) are flexible loop. ATP-binding positions include 160-162 (DGK), 226-227 (RF), D235, 241-242 (RK), A258, and K262. Residue D235 coordinates L-methionine. Residue K266 coordinates L-methionine.

It belongs to the AdoMet synthase family. As to quaternary structure, homotetramer; dimer of dimers. It depends on Mg(2+) as a cofactor. K(+) serves as cofactor.

The protein resides in the cytoplasm. The catalysed reaction is L-methionine + ATP + H2O = S-adenosyl-L-methionine + phosphate + diphosphate. The protein operates within amino-acid biosynthesis; S-adenosyl-L-methionine biosynthesis; S-adenosyl-L-methionine from L-methionine: step 1/1. Functionally, catalyzes the formation of S-adenosylmethionine (AdoMet) from methionine and ATP. The overall synthetic reaction is composed of two sequential steps, AdoMet formation and the subsequent tripolyphosphate hydrolysis which occurs prior to release of AdoMet from the enzyme. The protein is S-adenosylmethionine synthase of Anaeromyxobacter sp. (strain K).